The sequence spans 324 residues: Polyphosphate glucokinase (324 aa).

Positions 53 to 79 are disordered; sequence TSTDATADTPRTSPPSDTAGTTSRHRG. Polar residues predominate over residues 62–74; it reads PRTSPPSDTAGTT. 83–88 is a binding site for ATP; that stretch reads DIGGSS.

It belongs to the ROK (NagC/XylR) family. As to quaternary structure, homodimer.

It carries out the reaction [phosphate](n) + D-glucose = [phosphate](n-1) + D-glucose 6-phosphate + H(+). It catalyses the reaction D-glucose + ATP = D-glucose 6-phosphate + ADP + H(+). Catalyzes the phosphorylation of glucose using polyphosphate or ATP as the phosphoryl donor. This is Polyphosphate glucokinase (ppgK) from Mycobacterium leprae (strain TN).